Here is a 279-residue protein sequence, read N- to C-terminus: B3 domain-containing protein Os05g0481400 (279 aa).

A disordered region spans residues 45–68 (ARLQKSTRASPKPRKKFEVGATEV). Positions 139-230 (FVKTMVRSHV…RFKIYIIKAV (92 aa)) form a DNA-binding region, TF-B3. 2 stretches are compositionally biased toward acidic residues: residues 233–244 (DANESEPADEEA) and 252–262 (TEDAAEQDDSP). The tract at residues 233 to 279 (DANESEPADEEAIGDKDTSTEDAAEQDDSPNAEPLKGTKRRKLRGRR) is disordered. Positions 269 to 279 (GTKRRKLRGRR) are enriched in basic residues.

The protein resides in the nucleus. The chain is B3 domain-containing protein Os05g0481400 from Oryza sativa subsp. japonica (Rice).